Here is a 642-residue protein sequence, read N- to C-terminus: Mini-chromosome maintenance complex-binding protein (642 aa).

The segment covering 151–161 (ARVSPSTSYTP) has biased composition (polar residues). A disordered region spans residues 151–200 (ARVSPSTSYTPSRHKRSYEDDEDMDLQPNKQKDQHSGARQAGGLGGLHWR). A Phosphoserine modification is found at serine 154. Phosphothreonine is present on threonine 160. 2 positions are modified to phosphoserine: serine 167 and serine 298.

The protein belongs to the MCMBP family. As to quaternary structure, interacts with the MCM complex: associates with the MCM3-7 complex which lacks MCM2, while it does not interact with the MCM complex when MCM2 is present (MCM2-7 complex). Interacts with the RPA complex, when composed of all RPA1, RPA2 and RPA3 components, but not with RPA1 or RPA2 alone.

It localises to the nucleus. In terms of biological role, associated component of the MCM complex that acts as a regulator of DNA replication. Binds to the MCM complex during late S phase and promotes the disassembly of the MCM complex from chromatin, thereby acting as a key regulator of pre-replication complex (pre-RC) unloading from replicated DNA. Can dissociate the MCM complex without addition of ATP; probably acts by destabilizing interactions of each individual subunits of the MCM complex. Required for sister chromatid cohesion. The chain is Mini-chromosome maintenance complex-binding protein (Mcmbp) from Rattus norvegicus (Rat).